A 478-amino-acid polypeptide reads, in one-letter code: GTPase Obg (478 aa).

The Obg domain occupies 2 to 159 (TTFVDRVELH…RDIVLELKTV (158 aa)). The interval 61–87 (HHSPHRKATNGQPGAGDNRSGKDGQDL) is disordered. The OBG-type G domain occupies 160-330 (ADVALVGYPS…LSFALAGIIA (171 aa)). GTP contacts are provided by residues 166-173 (GYPSAGKS), 191-195 (FTTLV), 212-215 (DVPG), 282-285 (NKVD), and 311-313 (SAI). Positions 173 and 193 each coordinate Mg(2+). Residues 348–430 (PRAVDDAGFT…ENAVVFDWEP (83 aa)) form the OCT domain. The segment at 436-478 (AEMLGRRGEDHRLEEPRPAAQRRRERDAERDDAEKEYDEFDPF) is disordered. Residues 439–468 (LGRRGEDHRLEEPRPAAQRRRERDAERDDA) are compositionally biased toward basic and acidic residues. Residues 469-478 (EKEYDEFDPF) show a composition bias toward acidic residues.

It belongs to the TRAFAC class OBG-HflX-like GTPase superfamily. OBG GTPase family. Monomer. The cofactor is Mg(2+).

The protein localises to the cytoplasm. In terms of biological role, an essential GTPase which binds GTP, GDP and possibly (p)ppGpp with moderate affinity, with high nucleotide exchange rates and a fairly low GTP hydrolysis rate. Plays a role in control of the cell cycle, stress response, ribosome biogenesis and in those bacteria that undergo differentiation, in morphogenesis control. This Streptomyces griseus subsp. griseus (strain JCM 4626 / CBS 651.72 / NBRC 13350 / KCC S-0626 / ISP 5235) protein is GTPase Obg.